A 162-amino-acid polypeptide reads, in one-letter code: Xanthine phosphoribosyltransferase (162 aa).

Xanthine is bound by residues leucine 5 and threonine 12. Residue 113–117 (ANGQA) participates in 5-phospho-alpha-D-ribose 1-diphosphate binding. Residue lysine 141 participates in xanthine binding.

The protein belongs to the purine/pyrimidine phosphoribosyltransferase family. Xpt subfamily. In terms of assembly, homodimer.

The protein resides in the cytoplasm. The enzyme catalyses XMP + diphosphate = xanthine + 5-phospho-alpha-D-ribose 1-diphosphate. The protein operates within purine metabolism; XMP biosynthesis via salvage pathway; XMP from xanthine: step 1/1. Converts the preformed base xanthine, a product of nucleic acid breakdown, to xanthosine 5'-monophosphate (XMP), so it can be reused for RNA or DNA synthesis. The polypeptide is Xanthine phosphoribosyltransferase (xpt) (Streptococcus mitis).